We begin with the raw amino-acid sequence, 1001 residues long: Phosphoenolpyruvate carboxylase (1001 aa).

Catalysis depends on residues His189 and Lys642.

It belongs to the PEPCase type 1 family. Mg(2+) is required as a cofactor.

It carries out the reaction oxaloacetate + phosphate = phosphoenolpyruvate + hydrogencarbonate. Its function is as follows. Forms oxaloacetate, a four-carbon dicarboxylic acid source for the tricarboxylic acid cycle. The sequence is that of Phosphoenolpyruvate carboxylase from Prochlorococcus marinus (strain SARG / CCMP1375 / SS120).